A 364-amino-acid chain; its full sequence is Geissoschizine synthase (364 aa).

The Enoyl reductase (ER) domain occupies 24–343; the sequence is GILHPIKFSR…DYLSTAMERI (320 aa). Zn(2+) is bound at residue C51. N52 is an NADP(+) binding site. The Zn(2+) site is built by H73, E74, C104, C107, C110, C118, and C168. The NADP(+) site is built by L194, G196, L197, S216, T217, S218, K221, R261, V280, A282, S304, T306, and R351.

It belongs to the zinc-containing alcohol dehydrogenase family. Class-III subfamily. In terms of assembly, homodimer. It depends on Zn(2+) as a cofactor.

It catalyses the reaction (19E)-geissoschizine + NADP(+) = 4,21-dehydrogeissoschizine + NADPH. The catalysed reaction is (19E)-geissoschizine + NADPH + H(+) = (16R,19E)-isositsirikine + NADP(+). The enzyme catalyses (19E)-geissoschizine + NADPH + H(+) = (16R,19Z)-isositsirikine + NADP(+). The protein operates within alkaloid biosynthesis. Its function is as follows. An alcohol dehydrogenase involved in the biosynthesis of seco-iridoid and derivatives monoterpenoid indole alkaloids natural products. Catalyzes the production of geissoschizine and its conversion to (16R)-E-isositsirikine and (16R)-Z-isositsirikine. This is Geissoschizine synthase from Alstonia scholaris (Dogbane).